We begin with the raw amino-acid sequence, 226 residues long: Thiopurine S-methyltransferase (226 aa).

The S-adenosyl-L-methionine site is built by Trp10, Leu47, Glu68, and Arg130.

Belongs to the class I-like SAM-binding methyltransferase superfamily. TPMT family.

Its subcellular location is the cytoplasm. It catalyses the reaction S-adenosyl-L-methionine + a thiopurine = S-adenosyl-L-homocysteine + a thiopurine S-methylether.. In Shewanella sediminis (strain HAW-EB3), this protein is Thiopurine S-methyltransferase.